Here is a 346-residue protein sequence, read N- to C-terminus: Guanine nucleotide-binding protein subunit beta-2 (346 aa).

WD repeat units lie at residues 57–96 (GHINKVNSVHFAGDSRHCVTGSLDGKLIIWDTWTANKVQI), 99–138 (LRSAWVMTVAFSPSGNFVACGGMDNQCTVYDVNNRDASGV), 147–185 (GYEGFLSSCRFLDDGHLITGSGDMKICHWDLEKGVKTMD), 188–227 (GHAGDIAGLSLSPDMKTYITGSVDKTAKLWDVREEGHKQM), 230–269 (GHDMDVSSVCYHPSGFGFASCSEDQTARMYDLRADQQIAQ), 274–313 (QKNTGFTSCALSTSGRYLMCGGIEGNVHSWDTMKQRHTGT), and 316–346 (GHENRITCISLCPNGMCLASTSWDQQVRLWL).

This sequence belongs to the WD repeat G protein beta family. As to quaternary structure, g proteins are composed of 3 units, alpha, beta and gamma. Interacts with Ggamma30A/Guanine nucleotide-binding protein subunit gamma-e. In terms of tissue distribution, expressed exclusively in photoreceptor cells in the compound eye (at protein level).

It is found in the cytoplasm. It localises to the cell projection. The protein localises to the axon. The protein resides in the rhabdomere. In terms of biological role, guanine nucleotide-binding proteins (G proteins) are involved as a modulator or transducer in various transmembrane signaling systems. The beta and gamma chains are required for the GTPase activity, for replacement of GDP by GTP, and for G protein-effector interaction. The polypeptide is Guanine nucleotide-binding protein subunit beta-2 (Gbeta76C) (Drosophila melanogaster (Fruit fly)).